Here is a 192-residue protein sequence, read N- to C-terminus: MDFKIEYTWDGFPVRHEPVCVRLSPCEQGVKMEVSAPLFNDPPSPLGEPGKPFSELWNYEVVEAFFLNDTTKQYLEVELCPHGQHLVLLLAGRRNVWKKELPLSFKASRGGTNWEGEAYIPWSYFPPNVTKFNSFAIHGSNDRRVYEALYPVPQHELQQGQKPDFHRLEYFKPFSFNTLLGEEWRQPEPDLW.

Belongs to the UPF0462 family.

This chain is UPF0462 protein C4orf33 homolog (D3Ertd751e), found in Mus musculus (Mouse).